We begin with the raw amino-acid sequence, 172 residues long: Adenine phosphoribosyltransferase (172 aa).

Belongs to the purine/pyrimidine phosphoribosyltransferase family. In terms of assembly, homodimer.

Its subcellular location is the cytoplasm. It carries out the reaction AMP + diphosphate = 5-phospho-alpha-D-ribose 1-diphosphate + adenine. It functions in the pathway purine metabolism; AMP biosynthesis via salvage pathway; AMP from adenine: step 1/1. Catalyzes a salvage reaction resulting in the formation of AMP, that is energically less costly than de novo synthesis. This chain is Adenine phosphoribosyltransferase, found in Prochlorococcus marinus (strain NATL2A).